A 192-amino-acid polypeptide reads, in one-letter code: Probable cobalt-precorrin-6B C(15)-methyltransferase (decarboxylating) (192 aa).

S-adenosyl-L-methionine is bound by residues Thr-20, 44 to 48 (GSGTG), Glu-68, and Ala-96.

Belongs to the methyltransferase superfamily. Archaeal-type CbiT family.

It carries out the reaction Co-precorrin-6B + S-adenosyl-L-methionine = Co-precorrin-7 + S-adenosyl-L-homocysteine + CO2. It functions in the pathway cofactor biosynthesis; adenosylcobalamin biosynthesis; cob(II)yrinate a,c-diamide from sirohydrochlorin (anaerobic route): step 8/10. Catalyzes the methylation of C-15 in cobalt-precorrin-6B followed by the decarboxylation of C-12 to form cobalt-precorrin-7. This is Probable cobalt-precorrin-6B C(15)-methyltransferase (decarboxylating) from Sulfurisphaera tokodaii (strain DSM 16993 / JCM 10545 / NBRC 100140 / 7) (Sulfolobus tokodaii).